A 271-amino-acid chain; its full sequence is Type III pantothenate kinase (271 aa).

Residue 6–13 participates in ATP binding; it reads DVRNTHTV. Substrate is bound at residue 109–112; sequence GADR. The active-site Proton acceptor is the Asp-111. Asp-131 contacts K(+). Residue Ser-134 participates in ATP binding. Thr-186 provides a ligand contact to substrate.

It belongs to the type III pantothenate kinase family. As to quaternary structure, homodimer. NH4(+) serves as cofactor. K(+) is required as a cofactor.

Its subcellular location is the cytoplasm. It catalyses the reaction (R)-pantothenate + ATP = (R)-4'-phosphopantothenate + ADP + H(+). The protein operates within cofactor biosynthesis; coenzyme A biosynthesis; CoA from (R)-pantothenate: step 1/5. Catalyzes the phosphorylation of pantothenate (Pan), the first step in CoA biosynthesis. The sequence is that of Type III pantothenate kinase from Mycolicibacterium smegmatis (strain ATCC 700084 / mc(2)155) (Mycobacterium smegmatis).